Here is a 530-residue protein sequence, read N- to C-terminus: Probable cytochrome P450 519A1 (530 aa).

A helical transmembrane segment spans residues 1–21 (MESIINLIFYIIIFLILIDFL). Residue C476 coordinates heme.

This sequence belongs to the cytochrome P450 family. Requires heme as cofactor.

The protein resides in the membrane. This is Probable cytochrome P450 519A1 (cyp519A1) from Dictyostelium discoideum (Social amoeba).